The following is a 282-amino-acid chain: Pantothenate synthetase (282 aa).

30 to 37 (MGYLHEGH) provides a ligand contact to ATP. His37 serves as the catalytic Proton donor. Gln61 lines the (R)-pantoate pocket. Gln61 provides a ligand contact to beta-alanine. 148–151 (GQKD) lines the ATP pocket. Residue Gln154 coordinates (R)-pantoate. Residues Val177 and 185-188 (MSSR) each bind ATP.

The protein belongs to the pantothenate synthetase family. Homodimer.

It is found in the cytoplasm. The enzyme catalyses (R)-pantoate + beta-alanine + ATP = (R)-pantothenate + AMP + diphosphate + H(+). It participates in cofactor biosynthesis; (R)-pantothenate biosynthesis; (R)-pantothenate from (R)-pantoate and beta-alanine: step 1/1. Functionally, catalyzes the condensation of pantoate with beta-alanine in an ATP-dependent reaction via a pantoyl-adenylate intermediate. The sequence is that of Pantothenate synthetase from Syntrophomonas wolfei subsp. wolfei (strain DSM 2245B / Goettingen).